The following is a 198-amino-acid chain: Dual specificity protein phosphatase 14 (198 aa).

Positions G26–G167 constitute a Tyrosine-protein phosphatase domain. C111 functions as the Phosphocysteine intermediate in the catalytic mechanism.

This sequence belongs to the protein-tyrosine phosphatase family. Non-receptor class dual specificity subfamily. As to quaternary structure, interacts with CD28.

The catalysed reaction is O-phospho-L-tyrosyl-[protein] + H2O = L-tyrosyl-[protein] + phosphate. The enzyme catalyses O-phospho-L-seryl-[protein] + H2O = L-seryl-[protein] + phosphate. It catalyses the reaction O-phospho-L-threonyl-[protein] + H2O = L-threonyl-[protein] + phosphate. In terms of biological role, involved in the inactivation of MAP kinases. Dephosphorylates ERK, JNK and p38 MAP-kinases. Plays a negative role in TCR signaling by dephosphorylating MAP3K7 adapter TAB1 leading to its inactivation. The sequence is that of Dual specificity protein phosphatase 14 (DUSP14) from Homo sapiens (Human).